A 787-amino-acid polypeptide reads, in one-letter code: Protein translocase subunit SecA (787 aa).

Residues glutamine 85, 103 to 107, and aspartate 492 contribute to the ATP site; that span reads GEGKT.

The protein belongs to the SecA family. In terms of assembly, monomer and homodimer. Part of the essential Sec protein translocation apparatus which comprises SecA, SecYEG and auxiliary proteins SecDF. Other proteins may also be involved.

It is found in the cell membrane. The protein localises to the cytoplasm. It carries out the reaction ATP + H2O + cellular proteinSide 1 = ADP + phosphate + cellular proteinSide 2.. Its function is as follows. Part of the Sec protein translocase complex. Interacts with the SecYEG preprotein conducting channel. Has a central role in coupling the hydrolysis of ATP to the transfer of proteins into and across the cell membrane, serving as an ATP-driven molecular motor driving the stepwise translocation of polypeptide chains across the membrane. The chain is Protein translocase subunit SecA from Lacticaseibacillus casei (strain BL23) (Lactobacillus casei).